The sequence spans 490 residues: Probable glycine dehydrogenase (decarboxylating) subunit 2 (490 aa).

Lys273 carries the post-translational modification N6-(pyridoxal phosphate)lysine.

It belongs to the GcvP family. C-terminal subunit subfamily. The glycine cleavage system is composed of four proteins: P, T, L and H. In this organism, the P 'protein' is a heterodimer of two subunits. The cofactor is pyridoxal 5'-phosphate.

The catalysed reaction is N(6)-[(R)-lipoyl]-L-lysyl-[glycine-cleavage complex H protein] + glycine + H(+) = N(6)-[(R)-S(8)-aminomethyldihydrolipoyl]-L-lysyl-[glycine-cleavage complex H protein] + CO2. Functionally, the glycine cleavage system catalyzes the degradation of glycine. The P protein binds the alpha-amino group of glycine through its pyridoxal phosphate cofactor; CO(2) is released and the remaining methylamine moiety is then transferred to the lipoamide cofactor of the H protein. The polypeptide is Probable glycine dehydrogenase (decarboxylating) subunit 2 (Staphylococcus aureus (strain Newman)).